The following is a 164-amino-acid chain: UPF0304 protein HSM_1818 (164 aa).

This sequence belongs to the UPF0304 family.

This Histophilus somni (strain 2336) (Haemophilus somnus) protein is UPF0304 protein HSM_1818.